The sequence spans 943 residues: Translation initiation factor IF-2 (943 aa).

The disordered stretch occupies residues 46–359; it reads IKGMLSKQSA…MPQRKERPLP (314 aa). Over residues 57–76 the composition is skewed to low complexity; sequence KAPSSQAAKTPAKAAKTSSA. Composition is skewed to basic and acidic residues over residues 92-103 and 110-124; these read SNDHADVAEHSQ and AKQE…KTSD. Residues 130 to 141 show a composition bias toward polar residues; it reads SKSTILRPRSTQ. Residues 142–190 are compositionally biased toward low complexity; it reads TAHTNTNHNRGGNTASANNTANGRNSNRSNNNNNNRSANNANRSGNNNR. Composition is skewed to basic and acidic residues over residues 191-205, 239-250, and 259-271; these read SNER…RFDN, ASERQQPKRQEA, and KRSE…RPRT. Composition is skewed to low complexity over residues 289-299 and 315-330; these read PAAAAPKPASA and NFGR…GFNR. Basic residues predominate over residues 331 to 342; sequence NNRRNKKNKRRQ. A compositionally biased stretch (basic and acidic residues) spans 346–358; sequence PKKEMPQRKERPL. One can recognise a tr-type G domain in the interval 444-613; it reads PRPPVVTIMG…LLEADVLELK (170 aa). The tract at residues 453–460 is G1; the sequence is GHVDHGKT. A GTP-binding site is contributed by 453 to 460; sequence GHVDHGKT. The G2 stretch occupies residues 478–482; that stretch reads GITQH. The tract at residues 499–502 is G3; the sequence is DTPG. GTP-binding positions include 499 to 503 and 553 to 556; these read DTPGH and NKID. The tract at residues 553–556 is G4; sequence NKID. A G5 region spans residues 589–591; sequence SAK.

It belongs to the TRAFAC class translation factor GTPase superfamily. Classic translation factor GTPase family. IF-2 subfamily.

The protein resides in the cytoplasm. Functionally, one of the essential components for the initiation of protein synthesis. Protects formylmethionyl-tRNA from spontaneous hydrolysis and promotes its binding to the 30S ribosomal subunits. Also involved in the hydrolysis of GTP during the formation of the 70S ribosomal complex. The chain is Translation initiation factor IF-2 from Lacticaseibacillus casei (strain BL23) (Lactobacillus casei).